The chain runs to 37 residues: Large ribosomal subunit protein bL36A (37 aa).

It belongs to the bacterial ribosomal protein bL36 family.

The sequence is that of Large ribosomal subunit protein bL36A from Actinobacillus pleuropneumoniae serotype 5b (strain L20).